The sequence spans 699 residues: Elongation factor G (699 aa).

The tr-type G domain maps to 10–292 (NRTRNIGIMA…AVIDYLPSPT (283 aa)). GTP contacts are provided by residues 19–26 (AHIDAGKT), 90–94 (DTPGH), and 144–147 (NKMD). Residues 292-312 (TDVPAIRGEEDDGSEGSRSAS) form a disordered region.

It belongs to the TRAFAC class translation factor GTPase superfamily. Classic translation factor GTPase family. EF-G/EF-2 subfamily.

The protein resides in the cytoplasm. Functionally, catalyzes the GTP-dependent ribosomal translocation step during translation elongation. During this step, the ribosome changes from the pre-translocational (PRE) to the post-translocational (POST) state as the newly formed A-site-bound peptidyl-tRNA and P-site-bound deacylated tRNA move to the P and E sites, respectively. Catalyzes the coordinated movement of the two tRNA molecules, the mRNA and conformational changes in the ribosome. The protein is Elongation factor G of Coxiella burnetii (strain CbuG_Q212) (Coxiella burnetii (strain Q212)).